The following is a 466-amino-acid chain: Argininosuccinate lyase (466 aa).

It belongs to the lyase 1 family. Argininosuccinate lyase subfamily.

Its subcellular location is the cytoplasm. It carries out the reaction 2-(N(omega)-L-arginino)succinate = fumarate + L-arginine. It functions in the pathway amino-acid biosynthesis; L-arginine biosynthesis; L-arginine from L-ornithine and carbamoyl phosphate: step 3/3. The chain is Argininosuccinate lyase from Clostridium perfringens (strain ATCC 13124 / DSM 756 / JCM 1290 / NCIMB 6125 / NCTC 8237 / Type A).